The sequence spans 355 residues: UDP-N-acetylglucosamine--N-acetylmuramyl-(pentapeptide) pyrophosphoryl-undecaprenol N-acetylglucosamine transferase (355 aa).

UDP-N-acetyl-alpha-D-glucosamine-binding positions include 15–17 (TGG), N127, R163, S191, I244, 263–268 (ALTVSE), and Q288.

The protein belongs to the glycosyltransferase 28 family. MurG subfamily.

The protein resides in the cell inner membrane. It carries out the reaction di-trans,octa-cis-undecaprenyl diphospho-N-acetyl-alpha-D-muramoyl-L-alanyl-D-glutamyl-meso-2,6-diaminopimeloyl-D-alanyl-D-alanine + UDP-N-acetyl-alpha-D-glucosamine = di-trans,octa-cis-undecaprenyl diphospho-[N-acetyl-alpha-D-glucosaminyl-(1-&gt;4)]-N-acetyl-alpha-D-muramoyl-L-alanyl-D-glutamyl-meso-2,6-diaminopimeloyl-D-alanyl-D-alanine + UDP + H(+). It participates in cell wall biogenesis; peptidoglycan biosynthesis. Cell wall formation. Catalyzes the transfer of a GlcNAc subunit on undecaprenyl-pyrophosphoryl-MurNAc-pentapeptide (lipid intermediate I) to form undecaprenyl-pyrophosphoryl-MurNAc-(pentapeptide)GlcNAc (lipid intermediate II). The chain is UDP-N-acetylglucosamine--N-acetylmuramyl-(pentapeptide) pyrophosphoryl-undecaprenol N-acetylglucosamine transferase from Escherichia coli O9:H4 (strain HS).